The primary structure comprises 909 residues: Glucan endo-1,3-beta-D-glucosidase ARB_01444 (909 aa).

The first 23 residues, 1–23 (MKPYTTLPGVAVLVSLLTQSAHA), serve as a signal peptide directing secretion. A disordered region spans residues 136 to 187 (KRSPAPQRHPPAPTKATAGYQFTNCTSTSNPGPTATSPTSGIPSQPSAPPAT). The segment covering 155–180 (YQFTNCTSTSNPGPTATSPTSGIPSQ) has biased composition (polar residues). N-linked (GlcNAc...) asparagine glycans are attached at residues N159, N239, and N259. Positions 191–430 (QDIFQPIAKD…KGVIQVAKNP (240 aa)) are beta-sandwich subdomain. The 719-residue stretch at 191 to 909 (QDIFQPIAKD…AGEYSTYIAL (719 aa)) folds into the GH81 domain. Residues 431 to 524 (SAEEGEGIYD…GDSWTMVEGN (94 aa)) are alpha/beta subdomain. The interval 539 to 909 (SSQVTLSEGA…AGEYSTYIAL (371 aa)) is (alpha/beta)6 barrel subdomain. D654 is a catalytic residue. Residues H658, D727, E729, and E733 each contribute to the (1,3-beta-D-glucosyl)n site. Active-site residues include E729 and E733. A may provide specificity for triple-helical beta-glucan region spans residues 798 to 800 (KID). Y811 provides a ligand contact to (1,3-beta-D-glucosyl)n.

Belongs to the glycosyl hydrolase 81 family.

The protein resides in the secreted. It is found in the cell wall. The catalysed reaction is Hydrolysis of (1-&gt;3)-beta-D-glucosidic linkages in (1-&gt;3)-beta-D-glucans.. Cleaves internal linkages in 1,3-beta-glucan. Probably involved in cell separation after cytokinesis. The polypeptide is Glucan endo-1,3-beta-D-glucosidase ARB_01444 (Arthroderma benhamiae (strain ATCC MYA-4681 / CBS 112371) (Trichophyton mentagrophytes)).